Reading from the N-terminus, the 241-residue chain is 2,3,4,5-tetrahydropyridine-2,6-dicarboxylate N-acetyltransferase (241 aa).

Belongs to the transferase hexapeptide repeat family. DapH subfamily.

It catalyses the reaction (S)-2,3,4,5-tetrahydrodipicolinate + acetyl-CoA + H2O = L-2-acetamido-6-oxoheptanedioate + CoA. The protein operates within amino-acid biosynthesis; L-lysine biosynthesis via DAP pathway; LL-2,6-diaminopimelate from (S)-tetrahydrodipicolinate (acetylase route): step 1/3. Catalyzes the transfer of an acetyl group from acetyl-CoA to tetrahydrodipicolinate. This Thermoanaerobacter sp. (strain X514) protein is 2,3,4,5-tetrahydropyridine-2,6-dicarboxylate N-acetyltransferase.